Consider the following 225-residue polypeptide: Uridylate kinase (225 aa).

9–10 (GS) is a binding site for ATP. Residue Gly46 participates in UMP binding. Residues Gly47 and Arg51 each contribute to the ATP site. Residues Asp67 and 115-121 (THPAHTT) contribute to the UMP site. ATP-binding residues include Thr141, Asn142, Tyr147, and Asp150.

Belongs to the UMP kinase family. Homohexamer.

It is found in the cytoplasm. The enzyme catalyses UMP + ATP = UDP + ADP. It participates in pyrimidine metabolism; CTP biosynthesis via de novo pathway; UDP from UMP (UMPK route): step 1/1. Inhibited by UTP. In terms of biological role, catalyzes the reversible phosphorylation of UMP to UDP. The chain is Uridylate kinase from Methanococcus vannielii (strain ATCC 35089 / DSM 1224 / JCM 13029 / OCM 148 / SB).